Consider the following 883-residue polypeptide: Pre-mRNA-splicing factor syf1 homolog (883 aa).

12 HAT repeats span residues 13-45, 46-78, 88-120, 122-156, 158-190, 268-303, 368-406, 463-495, 531-565, 570-604, 642-676, and 678-712; these read INFEVEDVPYEEEILRNAYSVKHWLRYIDHKAK, APNNGVNMVYERALKELPGSYKIWHNYLRTRRK, PMYEEVNSAFERALVFMHKMPRIWMDYGAFMTS, CKITRTRHVFDRALRALPITQHGRIWPLYLQFVRR, EMPETALRVYRRYLKLFPEDTEEYVDYLQEADR, GLFDRARDIYEEAIQTVTTVRDFTQVFDEYAQFEEL, DKPAEIISTYTEAVQTVQPKQAVGKLHTLWVEFAKFYEA, KRKIAYYDDTETVQARLHRSLKVWSMYADLEES, NYFEEAYRAYEKGISLFKWPNVYDIWNSYLTKFLE, TKLERARDLFEQCLDQCPPEHAKYFYLLYAKLEEE, YGLPRTREIYEKAIESLPEQNMRHMCVKFAELETK, and GEVDRARAIYAHCSQVCDPRITADFWQTWKEFEVR. Disordered stretches follow at residues 794–851 and 864–883; these read RGET…DEEG and IPAKVFGSLKPSNQGDSDGE. Residues 812-834 show a composition bias toward acidic residues; sequence DEIDIGDSDEDDEEEDDDEENEM. 2 stretches are compositionally biased toward polar residues: residues 835 to 844 and 873 to 883; these read TNENQASAAV and KPSNQGDSDGE.

The protein belongs to the crooked-neck family. As to quaternary structure, component of the NTC(Nineteen)/Prp19 complex composed of at least fand, Prp19,CG9667/ISY1 and Cdc5/CDC5L. Within the complex, interacts with Prp19 and ISY1/CG9667.

It localises to the nucleus. In terms of biological role, subunit of the NTC(Nineteen)/Prp19 complex, which is part of the spliceosome. The complex participates in spliceosome assembly, its remodeling and is required for efficient spliceosome activation. Essential for efficient pre-mRNA splicing. In embryos, efficient pre-mRNA splicing of zygotic transcripts is essential during dynamic cellular processes that require rapid division and/or dramatic changes in gene expression such as blastoderm cellularization, tracheal branching morphogenesis, Malpighian morphogenesis and epidermal development. Part of its role in promoting embryo tracheal development is also due to specifically splicing bnl transcripts which results in the activation of the BNL-FGF pathway. This chain is Pre-mRNA-splicing factor syf1 homolog, found in Drosophila melanogaster (Fruit fly).